A 127-amino-acid polypeptide reads, in one-letter code: Aspartate 1-decarboxylase (127 aa).

Serine 25 acts as the Schiff-base intermediate with substrate; via pyruvic acid in catalysis. Serine 25 carries the pyruvic acid (Ser) modification. Position 57 (threonine 57) interacts with substrate. Tyrosine 58 (proton donor) is an active-site residue. Substrate is bound at residue 73-75 (GAA).

This sequence belongs to the PanD family. In terms of assembly, heterooctamer of four alpha and four beta subunits. The cofactor is pyruvate. Post-translationally, is synthesized initially as an inactive proenzyme, which is activated by self-cleavage at a specific serine bond to produce a beta-subunit with a hydroxyl group at its C-terminus and an alpha-subunit with a pyruvoyl group at its N-terminus.

The protein localises to the cytoplasm. It catalyses the reaction L-aspartate + H(+) = beta-alanine + CO2. It functions in the pathway cofactor biosynthesis; (R)-pantothenate biosynthesis; beta-alanine from L-aspartate: step 1/1. Catalyzes the pyruvoyl-dependent decarboxylation of aspartate to produce beta-alanine. The sequence is that of Aspartate 1-decarboxylase from Carboxydothermus hydrogenoformans (strain ATCC BAA-161 / DSM 6008 / Z-2901).